The following is a 415-amino-acid chain: Gamma-glutamyl phosphate reductase (415 aa).

Belongs to the gamma-glutamyl phosphate reductase family.

Its subcellular location is the cytoplasm. It catalyses the reaction L-glutamate 5-semialdehyde + phosphate + NADP(+) = L-glutamyl 5-phosphate + NADPH + H(+). It participates in amino-acid biosynthesis; L-proline biosynthesis; L-glutamate 5-semialdehyde from L-glutamate: step 2/2. Functionally, catalyzes the NADPH-dependent reduction of L-glutamate 5-phosphate into L-glutamate 5-semialdehyde and phosphate. The product spontaneously undergoes cyclization to form 1-pyrroline-5-carboxylate. This Leuconostoc citreum (strain KM20) protein is Gamma-glutamyl phosphate reductase.